The primary structure comprises 206 residues: MFEHYLSLFVRAVFVENMALAFFLGMCTFIAISKKIQTAIGLGIAVVVVLAITVPVNNLILHNLLEEGALSWTGSEQLASLDLRFLGLLSYIGVIAAIVQILEMTLDKYVPSLYNALGIFLPLITVNCAIMGASLFMVERDYTFGESVVYGVGAGVGWALAITLLAGIREKLKYSDVPDGLKGLGITFITVGLMSLGFMSFSGVQL.

Transmembrane regions (helical) follow at residues 12–32 (AVFV…FIAI), 36–56 (IQTA…TVPV), 85–105 (FLGL…LEMT), 118–138 (GIFL…LFMV), 148–168 (VVYG…LAGI), and 184–204 (LGIT…FSGV).

It belongs to the NqrDE/RnfAE family. Composed of six subunits; NqrA, NqrB, NqrC, NqrD, NqrE and NqrF.

The protein resides in the cell inner membrane. The enzyme catalyses a ubiquinone + n Na(+)(in) + NADH + H(+) = a ubiquinol + n Na(+)(out) + NAD(+). In terms of biological role, NQR complex catalyzes the reduction of ubiquinone-1 to ubiquinol by two successive reactions, coupled with the transport of Na(+) ions from the cytoplasm to the periplasm. NqrA to NqrE are probably involved in the second step, the conversion of ubisemiquinone to ubiquinol. This chain is Na(+)-translocating NADH-quinone reductase subunit E, found in Alcanivorax borkumensis (strain ATCC 700651 / DSM 11573 / NCIMB 13689 / SK2).